The sequence spans 242 residues: Biosynthetic peptidoglycan transglycosylase (242 aa).

The chain crosses the membrane as a helical span at residues 19 to 39 (LLLACAVLWGGGVALFSIVPV).

It belongs to the glycosyltransferase 51 family.

The protein resides in the cell inner membrane. The catalysed reaction is [GlcNAc-(1-&gt;4)-Mur2Ac(oyl-L-Ala-gamma-D-Glu-L-Lys-D-Ala-D-Ala)](n)-di-trans,octa-cis-undecaprenyl diphosphate + beta-D-GlcNAc-(1-&gt;4)-Mur2Ac(oyl-L-Ala-gamma-D-Glu-L-Lys-D-Ala-D-Ala)-di-trans,octa-cis-undecaprenyl diphosphate = [GlcNAc-(1-&gt;4)-Mur2Ac(oyl-L-Ala-gamma-D-Glu-L-Lys-D-Ala-D-Ala)](n+1)-di-trans,octa-cis-undecaprenyl diphosphate + di-trans,octa-cis-undecaprenyl diphosphate + H(+). Its pathway is cell wall biogenesis; peptidoglycan biosynthesis. Its function is as follows. Peptidoglycan polymerase that catalyzes glycan chain elongation from lipid-linked precursors. The sequence is that of Biosynthetic peptidoglycan transglycosylase from Klebsiella oxytoca.